Reading from the N-terminus, the 263-residue chain is Proteasome subunit alpha type-1 (263 aa).

Residue methionine 1 is modified to N-acetylmethionine. At serine 110 the chain carries Phosphoserine; alternate. O-linked (GlcNAc) serine; alternate glycosylation is present at serine 110. Residue lysine 115 forms a Glycyl lysine isopeptide (Lys-Gly) (interchain with G-Cter in ubiquitin) linkage. Serine 177 is subject to Phosphoserine. Residue lysine 208 forms a Glycyl lysine isopeptide (Lys-Gly) (interchain with G-Cter in ubiquitin) linkage. Residues 232–263 (FLEGLEERPQRKAQPAQPADEPAEKADEPMEH) form a disordered region. Residues 253–263 (PAEKADEPMEH) are compositionally biased toward basic and acidic residues.

The protein belongs to the peptidase T1A family. The 26S proteasome consists of a 20S proteasome core and two 19S regulatory subunits. The 20S proteasome core is a barrel-shaped complex made of 28 subunits that are arranged in four stacked rings. The two outer rings are each formed by seven alpha subunits, and the two inner rings are formed by seven beta subunits. The proteolytic activity is exerted by three beta-subunits PSMB5, PSMB6 and PSMB7. Interacts with NOTCH3. Interacts with ZFAND1.

The protein resides in the cytoplasm. The protein localises to the nucleus. Functionally, component of the 20S core proteasome complex involved in the proteolytic degradation of most intracellular proteins. This complex plays numerous essential roles within the cell by associating with different regulatory particles. Associated with two 19S regulatory particles, forms the 26S proteasome and thus participates in the ATP-dependent degradation of ubiquitinated proteins. The 26S proteasome plays a key role in the maintenance of protein homeostasis by removing misfolded or damaged proteins that could impair cellular functions, and by removing proteins whose functions are no longer required. Associated with the PA200 or PA28, the 20S proteasome mediates ubiquitin-independent protein degradation. This type of proteolysis is required in several pathways including spermatogenesis (20S-PA200 complex) or generation of a subset of MHC class I-presented antigenic peptides (20S-PA28 complex). This is Proteasome subunit alpha type-1 (PSMA1) from Macaca fascicularis (Crab-eating macaque).